We begin with the raw amino-acid sequence, 244 residues long: 3-deoxy-manno-octulosonate cytidylyltransferase (244 aa).

The protein belongs to the KdsB family.

Its subcellular location is the cytoplasm. The enzyme catalyses 3-deoxy-alpha-D-manno-oct-2-ulosonate + CTP = CMP-3-deoxy-beta-D-manno-octulosonate + diphosphate. Its pathway is nucleotide-sugar biosynthesis; CMP-3-deoxy-D-manno-octulosonate biosynthesis; CMP-3-deoxy-D-manno-octulosonate from 3-deoxy-D-manno-octulosonate and CTP: step 1/1. It participates in bacterial outer membrane biogenesis; lipopolysaccharide biosynthesis. Its function is as follows. Activates KDO (a required 8-carbon sugar) for incorporation into bacterial lipopolysaccharide in Gram-negative bacteria. In Vesicomyosocius okutanii subsp. Calyptogena okutanii (strain HA), this protein is 3-deoxy-manno-octulosonate cytidylyltransferase.